The following is a 338-amino-acid chain: Patr class I histocompatibility antigen, alpha chain G (338 aa).

The first 24 residues, 1 to 24 (MVVMAPRTLFLLLSGALTLTETWA), serve as a signal peptide directing secretion. The tract at residues 25 to 114 (GSHSMRYFSA…LRGYYNQSEA (90 aa)) is alpha-1. The Extracellular portion of the chain corresponds to 25–308 (GSHSMRYFSA…KQSSLPTIPI (284 aa)). Asn110 is a glycosylation site (N-linked (GlcNAc...) asparagine). The alpha-2 stretch occupies residues 115 to 206 (SSHTLQWMIG…ENGKEMLQRA (92 aa)). Cystine bridges form between Cys125-Cys188 and Cys227-Cys283. Residues 207–298 (DPPKTHVTHH…GLPEPLMLRW (92 aa)) form an alpha-3 region. The 91-residue stretch at 209–299 (PKTHVTHHPV…LPEPLMLRWK (91 aa)) folds into the Ig-like C1-type domain. The tract at residues 299–308 (KQSSLPTIPI) is connecting peptide. A helical transmembrane segment spans residues 309-332 (MGIVAGLVVLAAVVTGAAVAAVLW). Over 333–338 (RKKSSD) the chain is Cytoplasmic.

Belongs to the MHC class I family. Heterodimer of an alpha chain and a beta chain (beta-2-microglobulin). Homodimer; disulfide-linked. Binds to LILRB1 and LILRB2.

The protein localises to the cell membrane. Its function is as follows. Involved in the presentation of foreign antigens to the immune system. The protein is Patr class I histocompatibility antigen, alpha chain G (Patr-G) of Pan troglodytes (Chimpanzee).